Reading from the N-terminus, the 450-residue chain is UDP-N-acetylmuramoylalanine--D-glutamate ligase (450 aa).

An ATP-binding site is contributed by 119-125; the sequence is GSNGKTT.

Belongs to the MurCDEF family.

The protein localises to the cytoplasm. The enzyme catalyses UDP-N-acetyl-alpha-D-muramoyl-L-alanine + D-glutamate + ATP = UDP-N-acetyl-alpha-D-muramoyl-L-alanyl-D-glutamate + ADP + phosphate + H(+). The protein operates within cell wall biogenesis; peptidoglycan biosynthesis. Cell wall formation. Catalyzes the addition of glutamate to the nucleotide precursor UDP-N-acetylmuramoyl-L-alanine (UMA). In Bacillus anthracis (strain A0248), this protein is UDP-N-acetylmuramoylalanine--D-glutamate ligase.